The chain runs to 134 residues: Transcription antitermination protein NusB (134 aa).

The protein belongs to the NusB family.

Functionally, involved in transcription antitermination. Required for transcription of ribosomal RNA (rRNA) genes. Binds specifically to the boxA antiterminator sequence of the ribosomal RNA (rrn) operons. This chain is Transcription antitermination protein NusB, found in Shewanella oneidensis (strain ATCC 700550 / JCM 31522 / CIP 106686 / LMG 19005 / NCIMB 14063 / MR-1).